The following is a 189-amino-acid chain: Transcription factor FapR (189 aa).

The protein belongs to the FapR family.

Its function is as follows. Transcriptional factor involved in regulation of membrane lipid biosynthesis by repressing genes involved in fatty acid and phospholipid metabolism. This chain is Transcription factor FapR, found in Exiguobacterium sibiricum (strain DSM 17290 / CCUG 55495 / CIP 109462 / JCM 13490 / 255-15).